The primary structure comprises 547 residues: Chaperonin GroEL (547 aa).

ATP contacts are provided by residues 30–33 (TLGP), K51, 87–91 (DGTTT), G415, and D495. The segment at 525–547 (PDEKEAGGGAPDMGGMGGMGGMM) is disordered. Positions 531-547 (GGGAPDMGGMGGMGGMM) are enriched in gly residues.

Belongs to the chaperonin (HSP60) family. Forms a cylinder of 14 subunits composed of two heptameric rings stacked back-to-back. Interacts with the co-chaperonin GroES.

The protein localises to the cytoplasm. The enzyme catalyses ATP + H2O + a folded polypeptide = ADP + phosphate + an unfolded polypeptide.. Functionally, together with its co-chaperonin GroES, plays an essential role in assisting protein folding. The GroEL-GroES system forms a nano-cage that allows encapsulation of the non-native substrate proteins and provides a physical environment optimized to promote and accelerate protein folding. The protein is Chaperonin GroEL of Chromohalobacter salexigens (strain ATCC BAA-138 / DSM 3043 / CIP 106854 / NCIMB 13768 / 1H11).